Consider the following 79-residue polypeptide: UPF0291 protein SAV1341 (79 aa).

Positions 56-79 (IDPEGNDVTPEKIKEIQQKRDNKN) are disordered. Residues 64–79 (TPEKIKEIQQKRDNKN) show a composition bias toward basic and acidic residues.

It belongs to the UPF0291 family.

It localises to the cytoplasm. This chain is UPF0291 protein SAV1341, found in Staphylococcus aureus (strain Mu50 / ATCC 700699).